Here is an 822-residue protein sequence, read N- to C-terminus: uncharacterized protein (822 aa).

Topologically, residues 1–13 (MCHNSVRSGNKAG) are cytoplasmic. Residues 14 to 34 (FLGIKFGSALLSIATGAIAIA) traverse the membrane as a helical segment. Residues 35–44 (LLCKFHDHEA) lie on the Extracellular side of the membrane. A helical membrane pass occupies residues 45 to 65 (VLIVIVCSTLLYGIPSLISFI). Topologically, residues 66-76 (TETVFAPSKFH) are cytoplasmic. The chain crosses the membrane as a helical span at residues 77-97 (IGYFYNVLNFALPLITMGCTV). At 98–120 (DYFHNTLRSPISVQSESHRVYIT) the chain is on the extracellular side. A helical transmembrane segment spans residues 121 to 141 (TLDSLLIFTLFINGIQLGFFL). Topologically, residues 142 to 822 (KDGNANNFGS…PVEELVSPSK (681 aa)) are cytoplasmic. Residues 271–290 (RNTQQATKVPTEKKSNHRSS) form a disordered region. S690 is modified (phosphoserine). Residues 698 to 712 (TLQSSHSPTKSTSGN) show a composition bias toward polar residues. 2 disordered regions span residues 698-728 (TLQS…STVN) and 751-783 (NGEE…GYPE). Residues 761–776 (QSIQSSSSGSEQESAG) are compositionally biased toward low complexity.

The protein localises to the membrane. This is an uncharacterized protein from Saccharomyces cerevisiae (strain ATCC 204508 / S288c) (Baker's yeast).